Reading from the N-terminus, the 211-residue chain is Probable GTP-binding protein EngB (211 aa).

Residues 21–197 (TAPEFAFLGR…WGEIHRVAAE (177 aa)) enclose the EngB-type G domain. Residues 29–36 (GRSNVGKS), 55–59 (GRTRA), 80–83 (DLPG), 147–150 (TKAD), and 176–178 (CSA) each bind GTP. The Mg(2+) site is built by serine 36 and threonine 57.

The protein belongs to the TRAFAC class TrmE-Era-EngA-EngB-Septin-like GTPase superfamily. EngB GTPase family. Mg(2+) serves as cofactor.

Necessary for normal cell division and for the maintenance of normal septation. In Acidobacterium capsulatum (strain ATCC 51196 / DSM 11244 / BCRC 80197 / JCM 7670 / NBRC 15755 / NCIMB 13165 / 161), this protein is Probable GTP-binding protein EngB.